Consider the following 1486-residue polypeptide: Chromosome partition protein MukB (1486 aa).

ATP is bound at residue glycine 34 to serine 41. Coiled-coil stretches lie at residues leucine 326–glutamine 418, leucine 444–glutamine 480, and arginine 509–valine 603. A flexible hinge region spans residues proline 666 to arginine 783. 3 coiled-coil regions span residues glutamate 835 to glutamate 923, glutamate 977 to alanine 1115, and valine 1209 to serine 1266.

It belongs to the SMC family. MukB subfamily. Homodimerization via its hinge domain. Binds to DNA via its C-terminal region. Interacts, and probably forms a ternary complex, with MukE and MukF via its C-terminal region. The complex formation is stimulated by calcium or magnesium. Interacts with tubulin-related protein FtsZ.

It localises to the cytoplasm. It is found in the nucleoid. Its function is as follows. Plays a central role in chromosome condensation, segregation and cell cycle progression. Functions as a homodimer, which is essential for chromosome partition. Involved in negative DNA supercoiling in vivo, and by this means organize and compact chromosomes. May achieve or facilitate chromosome segregation by condensation DNA from both sides of a centrally located replisome during cell division. This is Chromosome partition protein MukB from Escherichia coli O157:H7.